Reading from the N-terminus, the 151-residue chain is Transcriptional repressor NrdR (151 aa).

The segment at 3 to 34 (CPYCGYEETRVLDSRVDSSGMTVRRRRECVKC) is a zinc-finger region. The ATP-cone domain maps to 49 to 139 (VFVVKKDGKR…VYKDFREIDQ (91 aa)).

It belongs to the NrdR family. The cofactor is Zn(2+).

Its function is as follows. Negatively regulates transcription of bacterial ribonucleotide reductase nrd genes and operons by binding to NrdR-boxes. This chain is Transcriptional repressor NrdR, found in Thermosipho melanesiensis (strain DSM 12029 / CIP 104789 / BI429).